The primary structure comprises 233 residues: Small ribosomal subunit protein uS3 (233 aa).

Positions 39–107 constitute a KH type-2 domain; it reads IRTFLKRKLY…EVNINIKEER (69 aa). The segment at 211–233 is disordered; sequence GVQPEKTEESAPAKKPRRARRGK. A compositionally biased stretch (basic and acidic residues) spans 213 to 222; it reads QPEKTEESAP. Basic residues predominate over residues 224 to 233; sequence KKPRRARRGK.

Belongs to the universal ribosomal protein uS3 family. As to quaternary structure, part of the 30S ribosomal subunit. Forms a tight complex with proteins S10 and S14.

In terms of biological role, binds the lower part of the 30S subunit head. Binds mRNA in the 70S ribosome, positioning it for translation. The chain is Small ribosomal subunit protein uS3 from Campylobacter lari (strain RM2100 / D67 / ATCC BAA-1060).